Consider the following 153-residue polypeptide: Aspartate carbamoyltransferase regulatory chain (153 aa).

Zn(2+) contacts are provided by C109, C114, C138, and C141.

It belongs to the PyrI family. In terms of assembly, contains catalytic and regulatory chains. The cofactor is Zn(2+).

In terms of biological role, involved in allosteric regulation of aspartate carbamoyltransferase. The polypeptide is Aspartate carbamoyltransferase regulatory chain (Cronobacter sakazakii (strain ATCC BAA-894) (Enterobacter sakazakii)).